The sequence spans 411 residues: Class E basic helix-loop-helix protein 40 (411 aa).

A disordered region spans residues 1–21 (MERIPSAQPPPTCLPKTPGLE). Positions 1 to 139 (MERIPSAQPP…LSGKNIEAGQ (139 aa)) are essential for interaction with BMAL1, E-box binding and repressor activity against the CLOCK-BMAL1 heterodimer. The region spanning 52-107 (TYKLPHRLIEKKRRDRINECIAQLKDLLPEHLKLTTLGHLEKAVVLELTLKHVKAL) is the bHLH domain. The necessary for interaction with RXRA and repressor activity against RXRA stretch occupies residues 75–79 (LKDLL). The 34-residue stretch at 142-175 (FCSGFQTCAREVLQYLAKHENTRDLKSSQLVTHL) folds into the Orange domain. Lysine 159 participates in a covalent cross-link: Glycyl lysine isopeptide (Lys-Gly) (interchain with G-Cter in SUMO1, SUMO2 and SUMO3). Residue lysine 167 forms a Glycyl lysine isopeptide (Lys-Gly) (interchain with G-Cter in SUMO2) linkage. A disordered region spans residues 186–293 (SASRKPLDSA…EPPTKKSRMQ (108 aa)). Serine 235 is modified (phosphoserine). Positions 248–271 (ELEKGDLRSEQPYFKSDHGRRFTV) are enriched in basic and acidic residues. Residue lysine 279 forms a Glycyl lysine isopeptide (Lys-Gly) (interchain with G-Cter in SUMO1); alternate linkage. Lysine 279 participates in a covalent cross-link: Glycyl lysine isopeptide (Lys-Gly) (interchain with G-Cter in SUMO1, SUMO2 and SUMO3); alternate. Residue lysine 279 forms a Glycyl lysine isopeptide (Lys-Gly) (interchain with G-Cter in SUMO2); alternate linkage. Lysine 288 participates in a covalent cross-link: Glycyl lysine isopeptide (Lys-Gly) (interchain with G-Cter in SUMO2). Residue serine 383 is modified to Phosphoserine.

As to quaternary structure, homodimer. Heterodimer with BHLHE41/DEC2. Interacts with TCF3/E47. Interacts with ubiquitin-conjugating enzyme UBE2I/UBC9. Interacts with HDAC1, SUMO1, RXRA and BMAL1. In terms of processing, ubiquitinated; which may lead to proteasomal degradation. Sumoylation inhibits its ubiquitination and promotes its negative regulation of the CLOCK-BMAL1 heterodimer transcriptional activator activity. In terms of tissue distribution, expressed in heart, spleen, lung, liver, muscle, kidney, uterus and gut. Highly expressed in the cerebral cortex, especially in the fifth layer, thalamus, superior colliculus, olfactory bulb, piriform cortex, hippocampus and hypothalamic nuclei.

The protein localises to the cytoplasm. It is found in the nucleus. Transcriptional repressor involved in the regulation of the circadian rhythm by negatively regulating the activity of the clock genes and clock-controlled genes. Acts as the negative limb of a novel autoregulatory feedback loop (DEC loop) which differs from the one formed by the PER and CRY transcriptional repressors (PER/CRY loop). Both these loops are interlocked as it represses the expression of PER1/2 and in turn is repressed by PER1/2 and CRY1/2. Represses the activity of the circadian transcriptional activator: CLOCK-BMAL1|BMAL2 heterodimer by competing for the binding to E-box elements (5'-CACGTG-3') found within the promoters of its target genes. Negatively regulates its own expression and the expression of DBP and BHLHE41/DEC2. Acts as a corepressor of RXR and the RXR-LXR heterodimers and represses the ligand-induced RXRA and NR1H3/LXRA transactivation activity. May be involved in the regulation of chondrocyte differentiation via the cAMP pathway. Represses the transcription of NR0B2 and attentuates the transactivation of NR0B2 by the CLOCK-BMAL1 complex. Drives the circadian rhythm of blood pressure through transcriptional repression of ATP1B1 in the cardiovascular system. The chain is Class E basic helix-loop-helix protein 40 (Bhlhe40) from Rattus norvegicus (Rat).